The primary structure comprises 60 residues: Large ribosomal subunit protein uL30 (60 aa).

The protein belongs to the universal ribosomal protein uL30 family. In terms of assembly, part of the 50S ribosomal subunit.

This Shewanella denitrificans (strain OS217 / ATCC BAA-1090 / DSM 15013) protein is Large ribosomal subunit protein uL30.